The chain runs to 78 residues: VEQPDSSSSDGIFYYDEASQTKKISDDHVSEYQTIPLNKKQYYSLDITYFKSSLDSHLLDLLWNKKDILFNSARQSDK.

This sequence belongs to the peptidase M67A family. CSN5 subfamily. Component of the CSN complex, probably composed of CSN1, CSN2, CSN3, CSN4, CSN5 (CSN5A or CSN5B), CSN6 (CSN6A or CSN6B), CSN7 and CSN8. It depends on a divalent metal cation as a cofactor.

It localises to the cytoplasm. The protein resides in the nucleus. In terms of biological role, probable protease subunit of the COP9 signalosome complex (CSN), a complex involved in various cellular and developmental processes such as photomorphogenesis and auxin and jasmonate responses. The CSN complex is an essential regulator of the ubiquitin (Ubl) conjugation pathway by mediating the deneddylation of the cullin subunits of the SCF-type E3 ligase complexes, leading to decrease the Ubl ligase activity of SCF. In the complex, it probably acts as the catalytic center that mediates the cleavage of Nedd8 from cullins. It however has no metalloprotease activity by itself and requires the other subunits of the CSN complex. The CSN complex is involved in repression of photomorphogenesis in darkness by regulating the activity of COP1-containing Ubl ligase complexes. The sequence is that of COP9 signalosome complex subunit 5b (CSN5B) from Brassica oleracea (Wild cabbage).